Here is a 234-residue protein sequence, read N- to C-terminus: 3,4-dihydroxy-2-butanone 4-phosphate synthase (234 aa).

Residues 39–40, Asp-44, 152–156, and Glu-176 contribute to the D-ribulose 5-phosphate site; these read RE and RRGHT. Residue Glu-40 coordinates Mg(2+). His-155 contacts Mg(2+).

It belongs to the DHBP synthase family. Homodimer. Mg(2+) is required as a cofactor. Requires Mn(2+) as cofactor.

It catalyses the reaction D-ribulose 5-phosphate = (2S)-2-hydroxy-3-oxobutyl phosphate + formate + H(+). It functions in the pathway cofactor biosynthesis; riboflavin biosynthesis; 2-hydroxy-3-oxobutyl phosphate from D-ribulose 5-phosphate: step 1/1. Functionally, catalyzes the conversion of D-ribulose 5-phosphate to formate and 3,4-dihydroxy-2-butanone 4-phosphate. The chain is 3,4-dihydroxy-2-butanone 4-phosphate synthase from Pelobacter propionicus (strain DSM 2379 / NBRC 103807 / OttBd1).